We begin with the raw amino-acid sequence, 379 residues long: Succinyl-diaminopimelate desuccinylase (379 aa).

His-70 serves as a coordination point for Zn(2+). Asp-72 is a catalytic residue. Zn(2+) is bound at residue Asp-103. Glu-137 serves as the catalytic Proton acceptor. Zn(2+) contacts are provided by Glu-138, Glu-166, and His-352.

It belongs to the peptidase M20A family. DapE subfamily. In terms of assembly, homodimer. Zn(2+) is required as a cofactor. The cofactor is Co(2+).

It catalyses the reaction N-succinyl-(2S,6S)-2,6-diaminopimelate + H2O = (2S,6S)-2,6-diaminopimelate + succinate. It functions in the pathway amino-acid biosynthesis; L-lysine biosynthesis via DAP pathway; LL-2,6-diaminopimelate from (S)-tetrahydrodipicolinate (succinylase route): step 3/3. In terms of biological role, catalyzes the hydrolysis of N-succinyl-L,L-diaminopimelic acid (SDAP), forming succinate and LL-2,6-diaminopimelate (DAP), an intermediate involved in the bacterial biosynthesis of lysine and meso-diaminopimelic acid, an essential component of bacterial cell walls. The polypeptide is Succinyl-diaminopimelate desuccinylase (Burkholderia ambifaria (strain MC40-6)).